The following is a 143-amino-acid chain: Transcriptional regulator MraZ (143 aa).

2 SpoVT-AbrB domains span residues 5 to 47 and 76 to 119; these read EYQH…PLNE and ATEC…SDER.

The protein belongs to the MraZ family. In terms of assembly, forms oligomers.

It localises to the cytoplasm. The protein resides in the nucleoid. This is Transcriptional regulator MraZ from Enterococcus faecalis (strain ATCC 700802 / V583).